The sequence spans 306 residues: High osmolarity signaling protein MOS1 (306 aa).

Over 1-23 the chain is Cytoplasmic; that stretch reads MEHSRPYGGRKRMSLGNILGDPF. The helical transmembrane segment at 24–44 threads the bilayer; it reads ALATISISLLAWFITFISCVI. The Extracellular segment spans residues 45 to 67; it reads AQVQANKNKGLPDKDNPDGNFPP. A helical membrane pass occupies residues 68–88; sequence FAWWAVVYSLFLIVGVVIVVA. Residues 89–96 are Cytoplasmic-facing; the sequence is SDAIQTYH. Residues 97 to 117 traverse the membrane as a helical segment; it reads VAVTGYLAGGMVLVTSGVNSL. At 118-126 the chain is on the extracellular side; it reads VYSKNGARE. A helical membrane pass occupies residues 127–147; the sequence is AAAAGFILLSMVVIVWIFYFG. The Cytoplasmic portion of the chain corresponds to 148–306; that stretch reads STPSSTPRAF…IAPSNYLILL (159 aa). A disordered region spans residues 204-242; that stretch reads FENPSPVGGASQAPTAPTMPTYGNNTMQPNNKSNDEEVL. Over residues 224–235 the composition is skewed to polar residues; the sequence is TYGNNTMQPNNK. The SH3 domain maps to 246–306; that stretch reads DYPYQAKAIY…IAPSNYLILL (61 aa).

Belongs to the SHO1 family. Forms homooligomers.

It is found in the cell membrane. Functionally, plasma membrane osmosensor that activates the high osmolarity glycerol (HOG) MAPK signaling pathway in response to high osmolarity. Affects fungal virulence. The sequence is that of High osmolarity signaling protein MOS1 (MOS1) from Metarhizium robertsii (strain ARSEF 23 / ATCC MYA-3075) (Metarhizium anisopliae (strain ARSEF 23)).